The primary structure comprises 223 residues: Ribonuclease S-2 (223 aa).

The N-terminal stretch at 1–22 (MAKSQLVSALFVFFFSLSPIYG) is a signal peptide. An intrachain disulfide couples cysteine 38 to cysteine 44. N-linked (GlcNAc...) asparagine glycosylation is present at asparagine 51. The active-site Proton donor is the histidine 55. Residues histidine 55 and 94–95 (QL) contribute to the RNA site. Disulfide bonds link cysteine 71/cysteine 119, cysteine 178/cysteine 211, and cysteine 194/cysteine 205. Glutamine 112 is a catalytic residue. 115–116 (KH) provides a ligand contact to RNA. Residue histidine 116 is the Proton acceptor of the active site.

It belongs to the RNase T2 family. In terms of tissue distribution, pistil.

It localises to the secreted. The protein localises to the extracellular space. The enzyme catalyses a ribonucleotidyl-ribonucleotide-RNA + H2O = a 3'-end 3'-phospho-ribonucleotide-RNA + a 5'-end dephospho-ribonucleoside-RNA + H(+). Functionally, self-incompatibility (SI) is the inherited ability of a flowering plant to prevent self-fertilization by discriminating between self and non-self pollen during pollination. In many species of the Solanaceae, self-incompatibility is controlled by the single, multiallelic locus S. This stylar glycoprotein is associated with expression of self-incompatibility in potato. In Solanum tuberosum (Potato), this protein is Ribonuclease S-2.